Consider the following 334-residue polypeptide: Anthranilate phosphoribosyltransferase (334 aa).

5-phospho-alpha-D-ribose 1-diphosphate is bound by residues G79, 82–83 (GD), S87, 89–92 (NIST), 107–115 (KHGNRSISS), and S119. Anthranilate is bound at residue G79. Mg(2+) is bound at residue S91. Anthranilate is bound at residue N110. Residue R165 participates in anthranilate binding. D224 and E225 together coordinate Mg(2+).

The protein belongs to the anthranilate phosphoribosyltransferase family. Homodimer. Mg(2+) serves as cofactor.

It catalyses the reaction N-(5-phospho-beta-D-ribosyl)anthranilate + diphosphate = 5-phospho-alpha-D-ribose 1-diphosphate + anthranilate. It functions in the pathway amino-acid biosynthesis; L-tryptophan biosynthesis; L-tryptophan from chorismate: step 2/5. Catalyzes the transfer of the phosphoribosyl group of 5-phosphorylribose-1-pyrophosphate (PRPP) to anthranilate to yield N-(5'-phosphoribosyl)-anthranilate (PRA). This chain is Anthranilate phosphoribosyltransferase, found in Streptococcus pneumoniae (strain ATCC 700669 / Spain 23F-1).